Here is a 277-residue protein sequence, read N- to C-terminus: Radial spoke head protein 9 homolog (277 aa).

The protein belongs to the flagellar radial spoke RSP9 family. As to quaternary structure, component of axonemal radial spoke complexes.

Its subcellular location is the cytoplasm. It is found in the cytoskeleton. The protein resides in the cilium axoneme. It localises to the flagellum axoneme. The protein localises to the cell projection. Its subcellular location is the kinocilium. Functions as part of axonemal radial spoke complexes that play an important part in the motility of sperm and cilia. Required for motility of olfactory and neural cilia and for the structural integrity of ciliary axonemes in both 9+0 and 9+2 motile cilia. Essential for both the radial spoke head assembly and the central pair microtubule stability in ependymal motile cilia. In Danio rerio (Zebrafish), this protein is Radial spoke head protein 9 homolog (rsph9).